The following is a 266-amino-acid chain: Transmembrane domain-containing protein TMIGD3 (266 aa).

Residues 1-20 are disordered; it reads MEGSPAGPIEQKEARWESSW. The helical transmembrane segment at 55–75 threads the bilayer; sequence FLPVMWLFILLSLALISDAMV. Asn192 carries an N-linked (GlcNAc...) asparagine glycan. The chain crosses the membrane as a helical span at residues 213 to 233; the sequence is ILIICILITGLGIISVISHLT.

As to expression, expressed in the lung and bone. Expressed at lower levels in osteosarcoma tissues (at protein level).

It localises to the membrane. Plays a suppressive role in osteosarcoma malignancy by inhibiting NF-kappa-B activity. The sequence is that of Transmembrane domain-containing protein TMIGD3 from Homo sapiens (Human).